Consider the following 244-residue polypeptide: tRNA (guanine-N(7)-)-methyltransferase (244 aa).

Polar residues predominate over residues 1–10 (MSDTPQSPAQ). The disordered stretch occupies residues 1–20 (MSDTPQSPAQDSLAEHDEAR). Positions 74, 99, 126, and 149 each coordinate S-adenosyl-L-methionine. Residue Asp-149 is part of the active site. Residues Lys-153, Asp-185, and 222–225 (TKFE) contribute to the substrate site.

It belongs to the class I-like SAM-binding methyltransferase superfamily. TrmB family.

It catalyses the reaction guanosine(46) in tRNA + S-adenosyl-L-methionine = N(7)-methylguanosine(46) in tRNA + S-adenosyl-L-homocysteine. It functions in the pathway tRNA modification; N(7)-methylguanine-tRNA biosynthesis. Functionally, catalyzes the formation of N(7)-methylguanine at position 46 (m7G46) in tRNA. The sequence is that of tRNA (guanine-N(7)-)-methyltransferase from Pseudomonas paraeruginosa (strain DSM 24068 / PA7) (Pseudomonas aeruginosa (strain PA7)).